Reading from the N-terminus, the 230-residue chain is Cytidylate kinase (230 aa).

12 to 20 lines the ATP pocket; it reads GPSGAGKGT.

Belongs to the cytidylate kinase family. Type 1 subfamily.

The protein localises to the cytoplasm. The enzyme catalyses CMP + ATP = CDP + ADP. It catalyses the reaction dCMP + ATP = dCDP + ADP. This is Cytidylate kinase from Shewanella piezotolerans (strain WP3 / JCM 13877).